We begin with the raw amino-acid sequence, 195 residues long: Large ribosomal subunit protein uL5 (195 aa).

Belongs to the universal ribosomal protein uL5 family. As to quaternary structure, part of the 50S ribosomal subunit; part of the 5S rRNA/L5/L18/L25 subcomplex. Contacts the 5S rRNA and the P site tRNA. Forms a bridge to the 30S subunit in the 70S ribosome.

This is one of the proteins that bind and probably mediate the attachment of the 5S RNA into the large ribosomal subunit, where it forms part of the central protuberance. In the 70S ribosome it contacts protein S13 of the 30S subunit (bridge B1b), connecting the 2 subunits; this bridge is implicated in subunit movement. Contacts the P site tRNA; the 5S rRNA and some of its associated proteins might help stabilize positioning of ribosome-bound tRNAs. In Chlorobium chlorochromatii (strain CaD3), this protein is Large ribosomal subunit protein uL5.